The chain runs to 2214 residues: Non-reducing polyketide synthase dpmpA (2214 aa).

An N-terminal acylcarrier protein transacylase domain (SAT) region spans residues 75-178; it reads EWIRTGDSHV…LAVCAGAWKD (104 aa). The 413-residue stretch at 372–784 folds into the Ketosynthase family 3 (KS3) domain; the sequence is DESIAIVGAS…GNNTAMIVCQ (413 aa). Active-site for beta-ketoacyl synthase activity residues include Cys532, His667, and His707. Residues 888 to 1184 are malonyl-CoA:ACP transacylase (MAT) domain; that stretch reads VFAGQTGHRP…AFLSARLGSP (297 aa). Ser974 functions as the For acyl/malonyl transferase activity in the catalytic mechanism. An N-terminal hotdog fold region spans residues 1255–1389; the sequence is PQLVSVVRSS…GIIKSQEQDR (135 aa). Residues 1255–1566 enclose the PKS/mFAS DH domain; it reads PQLVSVVRSS…FSKVPVRSLQ (312 aa). The tract at residues 1265–1560 is product template (PT) domain; that stretch reads GGADPEAAEF…AILGARFSKV (296 aa). Residues 1416 to 1566 form a C-terminal hotdog fold region; sequence GASVVQGAFV…FSKVPVRSLQ (151 aa). 2 Carrier domains span residues 1620–1695 and 1722–1802; these read NEVK…HSRL and KAST…SGAD. O-(pantetheine 4'-phosphoryl)serine is present on Ser1654. A disordered region spans residues 1698–1728; sequence VPQLSPHDTDRSSDLSAGQPPSTPKASTQEQ. The segment covering 1711–1726 has biased composition (polar residues); sequence DLSAGQPPSTPKASTQ. O-(pantetheine 4'-phosphoryl)serine is present on Ser1762. Residues 1805–1827 form a disordered region; the sequence is GFPRTSDNRRSEEGSVGHVGPEK. Residues 1810–1827 show a composition bias toward basic and acidic residues; sequence SDNRRSEEGSVGHVGPEK. The tract at residues 1958–2210 is methyltransferase (CMeT) domain; the sequence is FPAYRPDHRL…SREADLFRWI (253 aa).

It participates in secondary metabolite biosynthesis; terpenoid biosynthesis. In terms of biological role, non-reducing polyketide synthase; part of the gene cluster that mediates the biosynthesis of diterpenoid pyrones. The first step of the pathway is the synthesis of the alpha-pyrone moiety by the polyketide synthase dpmpA via condensation of one acetyl-CoA starter unit with 3 malonyl-CoA units and 2 methylations. The alpha-pyrone is then combined with geranylgeranyl pyrophosphate (GGPP) formed by the GGPP synthase dpmpD through the action of the prenyltransferase dpmpC to yield a linear alpha-pyrone diterpenoid. Subsequent steps in the diterpenoid pyrone biosynthetic pathway involve the decalin core formation, which is initiated by the epoxidation of the C10-C11 olefin by the FAD-dependent oxidoreductase dpmpE, and is followed by a cyclization cascade catalyzed by the terpene cyclase dpmpB. The short chain dehydrogenase/reductase dpmpG then oxidizes the 8S hydroxy group to a ketone and the short chain dehydrogenase/reductase dpmpH reduces the ketone to the 8R hydroxy group to yield higginsianin B. Higginsianin B is further methylated by the methyltransferase dpmpI to produce the intermediate named FDDP B. The cytochrome P450 monooxygenase dpmpJ then oxidizes the C-26 methyl to primary alcohol, producing the final diterpenoid pyrone with a C-26 primary alcohol on the gamma-pyrone moiety named FDDP C. This is Non-reducing polyketide synthase dpmpA from Macrophomina phaseolina (strain MS6) (Charcoal rot fungus).